Reading from the N-terminus, the 623-residue chain is DNA mismatch repair protein MutL (623 aa).

The span at 353–368 (AQQSAPRPANSYSPAS) shows a compositional bias: polar residues. Residues 353–389 (AQQSAPRPANSYSPASWRTAPPAPRSEWSPQTAHPAH) are disordered.

Belongs to the DNA mismatch repair MutL/HexB family.

In terms of biological role, this protein is involved in the repair of mismatches in DNA. It is required for dam-dependent methyl-directed DNA mismatch repair. May act as a 'molecular matchmaker', a protein that promotes the formation of a stable complex between two or more DNA-binding proteins in an ATP-dependent manner without itself being part of a final effector complex. This is DNA mismatch repair protein MutL from Brucella melitensis biotype 1 (strain ATCC 23456 / CCUG 17765 / NCTC 10094 / 16M).